Here is a 218-residue protein sequence, read N- to C-terminus: Small ribosomal subunit protein uS3c (218 aa).

The 74-residue stretch at 47-120 (VRTHIKSSSN…KLHIAIEKVA (74 aa)) folds into the KH type-2 domain.

It belongs to the universal ribosomal protein uS3 family. Part of the 30S ribosomal subunit.

The protein resides in the plastid. The protein localises to the chloroplast. The chain is Small ribosomal subunit protein uS3c (rps3) from Picea abies (Norway spruce).